A 156-amino-acid chain; its full sequence is Endoribonuclease YbeY (156 aa).

Zn(2+)-binding residues include histidine 122, histidine 126, and histidine 132.

This sequence belongs to the endoribonuclease YbeY family. The cofactor is Zn(2+).

Its subcellular location is the cytoplasm. Functionally, single strand-specific metallo-endoribonuclease involved in late-stage 70S ribosome quality control and in maturation of the 3' terminus of the 16S rRNA. The chain is Endoribonuclease YbeY from Bacillus mycoides (strain KBAB4) (Bacillus weihenstephanensis).